A 119-amino-acid chain; its full sequence is RNA guanine-N7 methyltransferase activating subunit (119 aa).

The interaction with RNMT stretch occupies residues 1–55 (MSDTSEEIPNFEEMFASRFTKDDKEYQEYLKRPPESPPIVEEWNSRAGGNQRNRG). Residues 30–119 (LKRPPESPPI…HNQRPPYGYY (90 aa)) form a disordered region. The residue at position 36 (serine 36) is a Phosphoserine. The short motif at 36 to 42 (SPPIVEE) is the RNMT-activating domain element. The segment covering 47 to 61 (AGGNQRNRGNWLQDN) has biased composition (polar residues). Positions 56-119 (NWLQDNRQFR…HNQRPPYGYY (64 aa)) are RNA-binding. A compositionally biased stretch (basic and acidic residues) spans 62 to 73 (RQFRGRDNRRGW). Arginine 85 carries the omega-N-methylarginine modification. Serine 86 carries the phosphoserine modification. A compositionally biased stretch (low complexity) spans 89–112 (NNNYPQQRPEPYYQQQYTQYGHNQ).

This sequence belongs to the RAM family. As to quaternary structure, interacts with RNMT; this interaction enhances mRNA binding and cap methyltransferase activity.

Its subcellular location is the nucleus. In terms of biological role, regulatory subunit of the mRNA-capping methyltransferase RNMT:RAMAC complex that methylates the N7 position of the added guanosine to the 5'-cap structure of mRNAs. Promotes the recruitment of the methyl donor, S-adenosyl-L-methionine, to RNMT. Regulates RNMT expression by a post-transcriptional stabilizing mechanism. Binds RNA. This is RNA guanine-N7 methyltransferase activating subunit (Ramac) from Mus musculus (Mouse).